The sequence spans 80 residues: uncharacterized protein (80 aa).

Belongs to the 2-oxoacid dehydrogenase family.

This is an uncharacterized protein from Mycobacterium tuberculosis (strain CDC 1551 / Oshkosh).